The following is a 457-amino-acid chain: Angiopoietin-related protein 6 (457 aa).

The signal sequence occupies residues 1 to 24 (MGTARLRKLQLLLLLGAWRALGGA). 2 coiled-coil regions span residues 51–77 (DSEL…RAAE) and 126–164 (LLAE…QHSS). Positions 201–235 (SNTSRRLDQTPEHQREQSLRQQGPPSSLLPTGHLA) are disordered. N-linked (GlcNAc...) asparagine glycosylation occurs at Asn202. Basic and acidic residues predominate over residues 205-218 (RRLDQTPEHQREQS). A compositionally biased stretch (polar residues) spans 219–229 (LRQQGPPSSLL). The Fibrinogen C-terminal domain maps to 238–456 (TRPVGPWRDC…KAVMLTRLVR (219 aa)). 2 disulfide bridges follow: Cys247/Cys274 and Cys397/Cys410.

In terms of tissue distribution, highly expressed in the liver, specifically in hepatocytes, and weakly in the heart. Expressed in hematopoietic cells, platelets and mast cells, and detected at wounded skin.

It localises to the secreted. Its function is as follows. May play a role in the wound healing process. May promote epidermal proliferation, remodeling and regeneration. May promote the chemotactic activity of endothelial cells and induce neovascularization. May counteract high-fat diet-induced obesity and related insulin resistance through increased energy expenditure. This chain is Angiopoietin-related protein 6 (Angptl6), found in Mus musculus (Mouse).